We begin with the raw amino-acid sequence, 251 residues long: MTPTGDWYKGGDEVGAPSACGGGSALMTLPEKNLGYKPETETNRRLRWMVGGVTILTFMALLYLVELIDQLTRHSLDNNGIRLLKTDVLWGISFAPVLHANWQHLVANTIPLLVLGFLIALAGLSRFIWVTAMVWIFGGSATWLIGNMGSSFGPTDHIGVSGLIFGWLAFLLVFGLFVRRGWDIIGCMVLFAYGGVLLGVMPVLGRCGGVSWQGHLCGAISGVVAAYLLSAPERKTRALKEAGTDSPRLKT.

Transmembrane regions (helical) follow at residues 48-68 (WMVG…VELI), 88-108 (VLWG…LVAN), 110-130 (IPLL…FIWV), 132-152 (AMVW…GSSF), 158-178 (IGVS…GLFV), 184-204 (IIGC…MPVL), and 209-229 (GVSW…AYLL).

It to M.tuberculosis Rv1337.

The protein resides in the cell membrane. This is an uncharacterized protein from Mycobacterium leprae (strain TN).